We begin with the raw amino-acid sequence, 977 residues long: Phosphatidylinositol 4-kinase PIK1alpha (977 aa).

Positions 1–125 (MSADITETPN…QAVRNLITKI (125 aa)) constitute a PIK helical domain. The segment at 205-261 (MSADIPKGSHSDDETATSSSIKPSLSRSASVPRRNTKKTSLSFSSDESEAYTTDDDD) is disordered. Residues 220–233 (ATSSSIKPSLSRSA) show a composition bias toward polar residues. Residues 250–261 (DESEAYTTDDDD) show a composition bias toward acidic residues. Residues 679-960 (EDWNTKKQRI…FLIGKSLGSM (282 aa)) enclose the PI3K/PI4K catalytic domain. A G-loop region spans residues 685 to 691 (KQRIKKS). Positions 826–834 (QIKDRHNGN) are catalytic loop. The segment at 845-869 (HIDFGFLLSNSPGSVGFEAAPFKLT) is activation loop.

The protein belongs to the PI3/PI4-kinase family. Type III PI4K subfamily.

Its subcellular location is the nucleus. The enzyme catalyses a 1,2-diacyl-sn-glycero-3-phospho-(1D-myo-inositol) + ATP = a 1,2-diacyl-sn-glycero-3-phospho-(1D-myo-inositol 4-phosphate) + ADP + H(+). Functionally, acts on phosphatidylinositol (PI) in the first committed step in the production of the second messenger inositol 1,4,5,-trisphosphate. This Candida albicans (strain SC5314 / ATCC MYA-2876) (Yeast) protein is Phosphatidylinositol 4-kinase PIK1alpha (PIKALPHA).